The sequence spans 183 residues: MSNHAVANRYAVALFELAQEKGLHESFVSELELIKAVFQDTPELMQFLTHPKTELTQKRELLEKTFKGKVNDTIFNTLVVLVERKRIDLIIPVVQKFKSLSYDAQKIAEAFVYSAKPLSEAEKDQLSVLFAKKVGKAKLLIENIVDPSIIGGLKIRIGDRIYDGSIKGQLDVLHRELVSGPRS.

Belongs to the ATPase delta chain family. In terms of assembly, F-type ATPases have 2 components, F(1) - the catalytic core - and F(0) - the membrane proton channel. F(1) has five subunits: alpha(3), beta(3), gamma(1), delta(1), epsilon(1). F(0) has three main subunits: a(1), b(2) and c(10-14). The alpha and beta chains form an alternating ring which encloses part of the gamma chain. F(1) is attached to F(0) by a central stalk formed by the gamma and epsilon chains, while a peripheral stalk is formed by the delta and b chains.

It localises to the cell membrane. Functionally, f(1)F(0) ATP synthase produces ATP from ADP in the presence of a proton or sodium gradient. F-type ATPases consist of two structural domains, F(1) containing the extramembraneous catalytic core and F(0) containing the membrane proton channel, linked together by a central stalk and a peripheral stalk. During catalysis, ATP synthesis in the catalytic domain of F(1) is coupled via a rotary mechanism of the central stalk subunits to proton translocation. Its function is as follows. This protein is part of the stalk that links CF(0) to CF(1). It either transmits conformational changes from CF(0) to CF(1) or is implicated in proton conduction. The sequence is that of ATP synthase subunit delta from Halalkalibacterium halodurans (strain ATCC BAA-125 / DSM 18197 / FERM 7344 / JCM 9153 / C-125) (Bacillus halodurans).